The following is a 77-amino-acid chain: Large ribosomal subunit protein eL14 (77 aa).

It belongs to the eukaryotic ribosomal protein eL14 family.

The protein is Large ribosomal subunit protein eL14 of Methanococcus maripaludis (strain C5 / ATCC BAA-1333).